The sequence spans 546 residues: Delta-1-pyrroline-5-carboxylate dehydrogenase (546 aa).

Position 279 to 284 (279 to 284 (KDISSN)) interacts with NAD(+). Catalysis depends on E297, which acts as the Proton acceptor. C331 serves as the catalytic Nucleophile.

This sequence belongs to the aldehyde dehydrogenase family.

It is found in the cytoplasm. It carries out the reaction L-glutamate 5-semialdehyde + NAD(+) + H2O = L-glutamate + NADH + 2 H(+). It functions in the pathway amino-acid degradation; L-proline degradation into L-glutamate; L-glutamate from L-proline: step 2/2. This Agaricus bisporus (White button mushroom) protein is Delta-1-pyrroline-5-carboxylate dehydrogenase (pruA).